Reading from the N-terminus, the 240-residue chain is LexA repressor (240 aa).

The H-T-H motif DNA-binding region spans 26 to 46 (FDEMKDALDLASKSGIHRLIT). Catalysis depends on for autocatalytic cleavage activity residues Ser-160 and Lys-198.

It belongs to the peptidase S24 family. In terms of assembly, homodimer.

It catalyses the reaction Hydrolysis of Ala-|-Gly bond in repressor LexA.. Functionally, represses a number of genes involved in the response to DNA damage (SOS response), including recA and lexA. In the presence of single-stranded DNA, RecA interacts with LexA causing an autocatalytic cleavage which disrupts the DNA-binding part of LexA, leading to derepression of the SOS regulon and eventually DNA repair. The chain is LexA repressor from Agrobacterium fabrum (strain C58 / ATCC 33970) (Agrobacterium tumefaciens (strain C58)).